Consider the following 236-residue polypeptide: Uridylate kinase (236 aa).

10 to 13 (KLSG) provides a ligand contact to ATP. Glycine 52 lines the UMP pocket. Positions 53 and 57 each coordinate ATP. Residues aspartate 72 and 133–140 (TGNPFFTT) each bind UMP. ATP contacts are provided by threonine 160, tyrosine 166, and aspartate 169.

This sequence belongs to the UMP kinase family. As to quaternary structure, homohexamer.

It is found in the cytoplasm. The catalysed reaction is UMP + ATP = UDP + ADP. Its pathway is pyrimidine metabolism; CTP biosynthesis via de novo pathway; UDP from UMP (UMPK route): step 1/1. Its activity is regulated as follows. Inhibited by UTP. Functionally, catalyzes the reversible phosphorylation of UMP to UDP. The sequence is that of Uridylate kinase from Bacteroides fragilis (strain ATCC 25285 / DSM 2151 / CCUG 4856 / JCM 11019 / LMG 10263 / NCTC 9343 / Onslow / VPI 2553 / EN-2).